The primary structure comprises 223 residues: Phosphoribosylformylglycinamidine synthase subunit PurQ (223 aa).

The 221-residue stretch at 3 to 223 folds into the Glutamine amidotransferase type-1 domain; sequence SAVILLPGLN…LFAGALGITA (221 aa). Residue Cys87 is the Nucleophile of the active site. Active-site residues include His197 and Glu199.

Part of the FGAM synthase complex composed of 1 PurL, 1 PurQ and 2 PurS subunits.

It localises to the cytoplasm. The enzyme catalyses N(2)-formyl-N(1)-(5-phospho-beta-D-ribosyl)glycinamide + L-glutamine + ATP + H2O = 2-formamido-N(1)-(5-O-phospho-beta-D-ribosyl)acetamidine + L-glutamate + ADP + phosphate + H(+). The catalysed reaction is L-glutamine + H2O = L-glutamate + NH4(+). The protein operates within purine metabolism; IMP biosynthesis via de novo pathway; 5-amino-1-(5-phospho-D-ribosyl)imidazole from N(2)-formyl-N(1)-(5-phospho-D-ribosyl)glycinamide: step 1/2. Functionally, part of the phosphoribosylformylglycinamidine synthase complex involved in the purines biosynthetic pathway. Catalyzes the ATP-dependent conversion of formylglycinamide ribonucleotide (FGAR) and glutamine to yield formylglycinamidine ribonucleotide (FGAM) and glutamate. The FGAM synthase complex is composed of three subunits. PurQ produces an ammonia molecule by converting glutamine to glutamate. PurL transfers the ammonia molecule to FGAR to form FGAM in an ATP-dependent manner. PurS interacts with PurQ and PurL and is thought to assist in the transfer of the ammonia molecule from PurQ to PurL. This chain is Phosphoribosylformylglycinamidine synthase subunit PurQ, found in Brucella abortus biovar 1 (strain 9-941).